The primary structure comprises 570 residues: MEFKYNGKVESIELNKYSKTLTQDPTQPATQAMHYGIGFKDEDFKKAQVGIVSMDWDGNPCNMHLGTLGSKIKNSVNQTDGLIGLQFHTIGVSDGIANGKLGMRYSLVSREVIADSIETNAGAEYYDAIVAVPGCDKNMPGSIIGMARLNRPSIMVYGGTIEHGEYKGEKLNIVSAFEALGQKITGNISEEDYHGVICNAIPGQGACGGMYTANTLASAIETLGMSLPYSASNPAVSQEKEDECDEIGLAIKNLLEKDIKPSDIMTKEAFENAITIVMVLGGSTNAVLHIIAMANAIGVEITQDDFQRISDVTPVLGDFKPSGKYMMEDLHKIGGVPAVLKYLLKEGKLHGDCLTVTGKTLAENVETALDLDFDSQDIIRPLENPIKATGHLQILYGNLAEGGSVAKISGKEGEFFKGTARVFDGEQHFIDGIESGRLHAGDVAVIRNIGPVGGPGMPEMLKPTSALIGAGLGKSCALITDGRFSGGTHGFVVGHIVPEAVEGGLIGLVEDDDIIEIDAVNNSISLKVADDEIARRRANYQKPAPKATRGVLAKFAKLTRPASEGCVTDL.

Cysteine 61 is a binding site for [2Fe-2S] cluster. Aspartate 94 contacts Mg(2+). Cysteine 135 contributes to the [2Fe-2S] cluster binding site. Mg(2+) is bound by residues aspartate 136 and lysine 137. Lysine 137 is modified (N6-carboxylysine). Cysteine 207 serves as a coordination point for [2Fe-2S] cluster. Residue glutamate 459 coordinates Mg(2+). Catalysis depends on serine 485, which acts as the Proton acceptor.

Belongs to the IlvD/Edd family. Homodimer. Requires [2Fe-2S] cluster as cofactor. Mg(2+) serves as cofactor.

The catalysed reaction is (2R)-2,3-dihydroxy-3-methylbutanoate = 3-methyl-2-oxobutanoate + H2O. It carries out the reaction (2R,3R)-2,3-dihydroxy-3-methylpentanoate = (S)-3-methyl-2-oxopentanoate + H2O. The protein operates within amino-acid biosynthesis; L-isoleucine biosynthesis; L-isoleucine from 2-oxobutanoate: step 3/4. It functions in the pathway amino-acid biosynthesis; L-valine biosynthesis; L-valine from pyruvate: step 3/4. Its function is as follows. Functions in the biosynthesis of branched-chain amino acids. Catalyzes the dehydration of (2R,3R)-2,3-dihydroxy-3-methylpentanoate (2,3-dihydroxy-3-methylvalerate) into 2-oxo-3-methylpentanoate (2-oxo-3-methylvalerate) and of (2R)-2,3-dihydroxy-3-methylbutanoate (2,3-dihydroxyisovalerate) into 2-oxo-3-methylbutanoate (2-oxoisovalerate), the penultimate precursor to L-isoleucine and L-valine, respectively. This Lactococcus lactis subsp. cremoris (strain SK11) protein is Dihydroxy-acid dehydratase.